Reading from the N-terminus, the 363-residue chain is MGFKCGIVGLPNVGKSTLFNALTKAGIEAANYPFCTIEPNTGVVPMPDPRLDALAEIVNPERVLPTTMEFVDIAGLVAGASKGEGLGNKFLANIRETDAIGHVVRCFENDDIVHVAGKIDPADDIETINTELALADLDSCERAIQRLQKRAKSGDKDAKFELSILEKILPVLENAGMIRSVALDKDELHAIKGYNFLTLKPTMYIANVNEDSFENNPYLDRVRQLAEQEGAVVVPVCAAIEAEIAELEDEEKVDFLQDLGIEEPGLNRVIRAGYRLLNLQTYFTAGVKEVRAWTVAVGATAPKAAAVIHTDFEKGFIRAEVIAYDDFIQFKGENGAKEAGKWRLEGKDYIVQDGDVMHFRFNV.

Residues 3–256 (FKCGIVGLPN…LEDEEKVDFL (254 aa)) form the OBG-type G domain. Residue 12 to 17 (NVGKST) coordinates ATP. Mg(2+) is bound by residues serine 16 and threonine 36. In terms of domain architecture, TGS spans 278–361 (NLQTYFTAGV…QDGDVMHFRF (84 aa)).

The protein belongs to the TRAFAC class OBG-HflX-like GTPase superfamily. OBG GTPase family. YchF/OLA1 subfamily. Mg(2+) serves as cofactor.

Its function is as follows. ATPase that binds to both the 70S ribosome and the 50S ribosomal subunit in a nucleotide-independent manner. The polypeptide is Ribosome-binding ATPase YchF (Haemophilus ducreyi (strain 35000HP / ATCC 700724)).